A 313-amino-acid polypeptide reads, in one-letter code: Aspartate carbamoyltransferase catalytic subunit (313 aa).

Residues Arg58 and Thr59 each contribute to the carbamoyl phosphate site. Position 86 (Lys86) interacts with L-aspartate. Carbamoyl phosphate contacts are provided by Arg108, His136, and Gln139. L-aspartate contacts are provided by Arg169 and Arg223. Gly264 and Pro265 together coordinate carbamoyl phosphate.

It belongs to the aspartate/ornithine carbamoyltransferase superfamily. ATCase family. As to quaternary structure, heterododecamer (2C3:3R2) of six catalytic PyrB chains organized as two trimers (C3), and six regulatory PyrI chains organized as three dimers (R2).

It carries out the reaction carbamoyl phosphate + L-aspartate = N-carbamoyl-L-aspartate + phosphate + H(+). Its pathway is pyrimidine metabolism; UMP biosynthesis via de novo pathway; (S)-dihydroorotate from bicarbonate: step 2/3. Its function is as follows. Catalyzes the condensation of carbamoyl phosphate and aspartate to form carbamoyl aspartate and inorganic phosphate, the committed step in the de novo pyrimidine nucleotide biosynthesis pathway. The sequence is that of Aspartate carbamoyltransferase catalytic subunit from Halothermothrix orenii (strain H 168 / OCM 544 / DSM 9562).